Here is an 84-residue protein sequence, read N- to C-terminus: MGGISIWQLLIVAVIVVLLFGTKKLGSIGSDLGASIKGFKKAMSDDDAKQDKTSQDADFTAKSIADKQGEAKKEDAKSQDKEQV.

Residues 1 to 21 (MGGISIWQLLIVAVIVVLLFG) form a helical membrane-spanning segment. Basic and acidic residues-rich tracts occupy residues 42 to 55 (AMSD…KTSQ) and 64 to 84 (IADK…KEQV). The disordered stretch occupies residues 42–84 (AMSDDDAKQDKTSQDADFTAKSIADKQGEAKKEDAKSQDKEQV).

It belongs to the TatA/E family. In terms of assembly, the Tat system comprises two distinct complexes: a TatABC complex, containing multiple copies of TatA, TatB and TatC subunits, and a separate TatA complex, containing only TatA subunits. Substrates initially bind to the TatABC complex, which probably triggers association of the separate TatA complex to form the active translocon.

Its subcellular location is the cell inner membrane. Part of the twin-arginine translocation (Tat) system that transports large folded proteins containing a characteristic twin-arginine motif in their signal peptide across membranes. TatA could form the protein-conducting channel of the Tat system. This is Sec-independent protein translocase protein TatA from Salmonella typhi.